A 582-amino-acid chain; its full sequence is Potassium voltage-gated channel subfamily KQT member 1 (582 aa).

The Cytoplasmic segment spans residues 1–31 (RVSIYSARRPLLARTHIQGRVYNFLERPTGW). A helical transmembrane segment spans residues 32-53 (KCFVYHFAVFLIVLVCLIFSVL). Residues 54–64 (STIEQYVALAT) are Extracellular-facing. Residues 65–87 (GTLFWMEIVLVVFFGTEYVVRLW) traverse the membrane as a helical segment. At 88-103 (SAGCRSKYVGVWGRLR) the chain is on the cytoplasmic side. A helical membrane pass occupies residues 104–129 (FARKPISIIDLIVVLASMVVLCVGSK). At 130-137 (GQVFATSA) the chain is on the extracellular side. Residues 138–153 (IRGIRFLQILRMLHVD) form a helical; Voltage-sensor membrane-spanning segment. Residues 149-157 (MLHVDRQGG) are interaction with KCNE3. Over 154-171 (RQGGTWRLLGSVVFIHRQ) the chain is Cytoplasmic. Q155 is a binding site for a 1,2-diacyl-sn-glycero-3-phospho-(1D-myo-inositol-4,5-bisphosphate). A helical membrane pass occupies residues 172 to 194 (ELITTLYIGFLGLIFSSYFVYLA). The Extracellular segment spans residues 195 to 210 (EKDAVNESGQVEFGSY). N200 carries N-linked (GlcNAc...) asparagine glycosylation. The pore-forming intramembrane region spans 211 to 231 (ADALWWGVVTVTTIGYGDKVP). Residues 232 to 233 (QT) lie on the Extracellular side of the membrane. A helical membrane pass occupies residues 234-259 (WVGKTIASCFSVFAISFFALPAGILG). At 260-582 (SGFALKVQQK…VPRRGPEEGS (323 aa)) the chain is on the cytoplasmic side. The segment at 281–293 (AAASLIQTAWRCY) is interaction with CALM. Phosphoserine occurs at positions 318 and 320. The interaction with CALM; calcium-dependent stretch occupies residues 426–440 (KVIRRMQYFVAKKKF). Residues 446-483 (PYDVRDVIEQYSQGHLNLMVRIKELQRRLDQSIGKPSL) form an interaction with KCNE1 C-terminus region. Residues 496-532 (SNTIGARLNRVEDKVAQLDQRLVLITDMLQQLLSLHH) adopt a coiled-coil conformation. The segment at 499-527 (IGARLNRVEDKVAQLDQRLVLITDMLQQL) is interaction with AKAP9. Positions 500–531 (GARLNRVEDKVAQLDQRLVLITDMLQQLLSLH) are C-terminal assembly domain (tetramerization). The tract at residues 530–582 (LHHGGPPGSRPPSGGGAQVQPCGPTNPELFLPGNALPTYEQLTVPRRGPEEGS) is disordered.

This sequence belongs to the potassium channel family. KQT (TC 1.A.1.15) subfamily. Kv7.1/KCNQ1 sub-subfamily. As to quaternary structure, tetramer. Heterotetramer with KCNE1; targets to the membrane raft. Interacts (via C-terminus) with CALM; forms a heterooctameric structure (with 4:4 KCNQ1:CALM stoichiometry) in a calcium-independent manner. Interacts with AKAP9; targets protein kinase A (PKA) catalytic and regulatory subunits and protein phosphatase 1 (PP1) to the KCNQ1-KCNE1 complex, allowing PKA-mediated phosphorylation and increase of delayed rectifier potassium channel activity. Interacts with KCNE2; form a heterooligomer complex that targets to the membrane raft and leading to currents with an apparently instantaneous activation, a rapid deactivation process and a linear current-voltage relationship and decreases the amplitude of the outward current. Interacts with AP2M1; mediates estrogen-induced internalization via clathrin-coated vesicles. Interacts with NEDD4L; promotes internalization and decreases I(Ks) currents. Interacts with USP2; counteracts the NEDD4L-specific down-regulation of I(Ks) and restore plasma membrane localization. Heterotetramer with KCNQ5; has a voltage-gated potassium channel activity. Interacts with KCNE3; four KCNE3 molecules are bound to one KCNQ1 tetramer (4:4 KCNQ1:KCNE3 stoichiometry); alters membrane raft localization; affects KCNQ1 structure and gating properties. Interacts with KCNE4; impairs KCNQ1 localization in lipid rafts and inhibits voltage-gated potassium channel activity. Interacts with KCNE5; impairs KCNQ1 localization in lipid rafts and only conducts current upon strong and continued depolarization. In terms of processing, phosphorylated by PKA; increases delayed rectifier potassium channel activity of the KCNQ1-KCNE1 complex through a macromolecular complex that includes PKA, PP1, and the targeting protein AKAP9. Ubiquitinated by NEDD4L; promotes internalization. The ubiquitinylated form is internalized through a clathrin-mediated endocytosis by interacting with AP2M1 and is recycled back to the cell membrane via RAB4A and RAB11A. Post-translationally, deubiquitinated by USP2; counteracts the NEDD4L-specific down-regulation of I(Ks) and restores the membrane localization.

The protein resides in the cell membrane. The protein localises to the cytoplasmic vesicle membrane. It is found in the early endosome. It localises to the membrane raft. Its subcellular location is the endoplasmic reticulum. The protein resides in the basolateral cell membrane. The enzyme catalyses K(+)(in) = K(+)(out). With respect to regulation, PIP2 molecule is essential to activate KCNQ channels by inducing the coupling of the voltage-sensing domain (VSD) and the pore-forming domain (PD). Upon channel activation, PIP2 disrupts the VSD-calmodulin/CALM interactions, causing the release of CALM from the VSD which triggers the opening of the gate. Calcium potentiates KCNQ1 channel current through calcium-bound CALM. Calcium-bound CALM competes with PIP2 to stabilize the channel open state. Functionally, pore-forming subunit of the voltage-gated potassium (Kv) channel involved in the regulation of cardiomyocyte excitability and important in normal development and functions of myocardium, inner ear, stomach and colon. Associates with KCNE beta subunits that modulates current kinetics. Induces a voltage-dependent by rapidly activating and slowly deactivating potassium-selective outward current. Also promotes a delayed voltage activated potassium current showing outward rectification characteristic. During beta-adrenergic receptor stimulation participates in cardiac repolarization by associating with KCNE1 to form the I(Ks) cardiac potassium current that increases the amplitude and slows down the activation kinetics of outward potassium current I(Ks). Muscarinic agonist oxotremorine-M strongly suppresses KCNQ1/KCNE1 current. When associated with KCNE3, forms the potassium channel that is important for cyclic AMP-stimulated intestinal secretion of chloride ions. This interaction with KCNE3 is reduced by 17beta-estradiol, resulting in the reduction of currents. During conditions of increased substrate load, maintains the driving force for proximal tubular and intestinal sodium ions absorption, gastric acid secretion, and cAMP-induced jejunal chloride ions secretion. Allows the provision of potassium ions to the luminal membrane of the secretory canaliculus in the resting state as well as during stimulated acid secretion. When associated with KCNE2, forms a heterooligomer complex leading to currents with an apparently instantaneous activation, a rapid deactivation process and a linear current-voltage relationship and decreases the amplitude of the outward current. When associated with KCNE4, inhibits voltage-gated potassium channel activity. When associated with KCNE5, this complex only conducts current upon strong and continued depolarization. Also forms a heterotetramer with KCNQ5 that has a voltage-gated potassium channel activity. Binds with phosphatidylinositol 4,5-bisphosphate. In Felis catus (Cat), this protein is Potassium voltage-gated channel subfamily KQT member 1.